A 340-amino-acid chain; its full sequence is Phospho-N-acetylmuramoyl-pentapeptide-transferase (340 aa).

10 consecutive transmembrane segments (helical) span residues 3–23 (MSLI…PHFI), 53–73 (GGTV…FHVF), 79–99 (AYGA…IGFL), 119–139 (MALQ…PSGT), 144–164 (IGGL…FWIV), 176–196 (IDGL…IIAF), 200–220 (ELAI…FFVF), 227–247 (VFMG…ISIA), 250–270 (VEWT…SVML), and 315–335 (VDAF…WMVL).

The protein belongs to the glycosyltransferase 4 family. MraY subfamily. It depends on Mg(2+) as a cofactor.

Its subcellular location is the cell membrane. It carries out the reaction UDP-N-acetyl-alpha-D-muramoyl-L-alanyl-gamma-D-glutamyl-L-lysyl-D-alanyl-D-alanine + di-trans,octa-cis-undecaprenyl phosphate = Mur2Ac(oyl-L-Ala-gamma-D-Glu-L-Lys-D-Ala-D-Ala)-di-trans,octa-cis-undecaprenyl diphosphate + UMP. The protein operates within cell wall biogenesis; peptidoglycan biosynthesis. Catalyzes the initial step of the lipid cycle reactions in the biosynthesis of the cell wall peptidoglycan: transfers peptidoglycan precursor phospho-MurNAc-pentapeptide from UDP-MurNAc-pentapeptide onto the lipid carrier undecaprenyl phosphate, yielding undecaprenyl-pyrophosphoryl-MurNAc-pentapeptide, known as lipid I. This chain is Phospho-N-acetylmuramoyl-pentapeptide-transferase, found in Streptococcus thermophilus (strain CNRZ 1066).